The primary structure comprises 449 residues: Probable aminotransferase TAT1 (449 aa).

A compositionally biased stretch (polar residues) spans 1-12 (MNHNSNLVLPSH). Residues 1-20 (MNHNSNLVLPSHQTETQTQD) form a disordered region.

It belongs to the class-I pyridoxal-phosphate-dependent aminotransferase family. It depends on pyridoxal 5'-phosphate as a cofactor.

This Arabidopsis thaliana (Mouse-ear cress) protein is Probable aminotransferase TAT1.